The sequence spans 757 residues: MRDMRASSPETTSAVKCPFNKTAVEGTHNKDWWPNQLRVDLLHQHSNKSNPLGETFDYAKEFQKLDYAALKRDLHALMTDSQDWWPADFGHYGGLFIRMAWHSAGTYRIGDGRGGAGRGQQRFAPLNSWPDNVSLDKARRLLWPIKKKYGQQISWADLIVLAGNVALESMGFKTFGFAGGRVDTWEPDQDVYWGREMTWLGGDVRYGAVSEGVHHPDEHRGAKEKASKNSDSRVLENPLAAVQMGLIYVNPEGPDGCPDPLASARDIRETFARMAMNDEETVALIAGGHTFGKTHGAAPADNVGPEPEAGELEQQGLGWHNRFGSGKAGDTITSGLEVTWTKTPTQWSNDFFEHLFGYEWELTKSPAGAYQWVAKDAAATIPHAHDPSKKLLPMMLTSDLALRFDPVYEKISRHFHAHPDQFADAFARAWFKLTHRDMGPRVRYLGPEVPAEELIWQDPVPKVSHVLVDAQDLLALKHKISASGLGISQLVSTAWASASTFRGSDKRGGANGGRLCLAPQSQWEVNQPQQLSVVLETLRRVQAEFNAQAGDKRISLADLIVLAGGVGVEQAAKRAGIVLEVPFVPGRTDALQEQTDVSSFAPLEPFADGFRNYVKEGCVVPSEHLLIDRAQLLTLTAPEMTVLIGGLRVLGANVGGVKHGVFTDRLGTLSNDFFINLLDMGTEWAPVSKERHLFEGRDRRTGALKWTGTRVDLVFGSNSLLRALAEVYAAVDAQEKFVRDFVAAWSKVMHLDRFDLV.

Residues 101–248 constitute a cross-link (tryptophyl-tyrosyl-methioninium (Trp-Tyr) (with M-274)); the sequence is WHSAGTYRIG…LAAVQMGLIY (148 aa). Residue His-102 is the Proton acceptor of the active site. The segment at 213-232 is disordered; it reads VHHPDEHRGAKEKASKNSDS. Positions 248 to 274 form a cross-link, tryptophyl-tyrosyl-methioninium (Tyr-Met) (with W-101); it reads YVNPEGPDGCPDPLASARDIRETFARM. Residue His-289 coordinates heme b.

The protein belongs to the peroxidase family. Peroxidase/catalase subfamily. In terms of assembly, homodimer or homotetramer. Requires heme b as cofactor. In terms of processing, formation of the three residue Trp-Tyr-Met cross-link is important for the catalase, but not the peroxidase activity of the enzyme.

It catalyses the reaction H2O2 + AH2 = A + 2 H2O. It carries out the reaction 2 H2O2 = O2 + 2 H2O. Its function is as follows. Bifunctional enzyme with both catalase and broad-spectrum peroxidase activity. This chain is Catalase-peroxidase, found in Xylella fastidiosa (strain M23).